A 1051-amino-acid polypeptide reads, in one-letter code: DNA-directed RNA polymerase subunit beta (1051 aa).

It belongs to the RNA polymerase beta chain family. In terms of assembly, in plastids the minimal PEP RNA polymerase catalytic core is composed of four subunits: alpha, beta, beta', and beta''. When a (nuclear-encoded) sigma factor is associated with the core the holoenzyme is formed, which can initiate transcription (Potential).

It localises to the plastid. Its subcellular location is the apicoplast. It carries out the reaction RNA(n) + a ribonucleoside 5'-triphosphate = RNA(n+1) + diphosphate. In terms of biological role, DNA-dependent RNA polymerase catalyzes the transcription of DNA into RNA using the four ribonucleoside triphosphates as substrates. The chain is DNA-directed RNA polymerase subunit beta (rpoB) from Toxoplasma gondii.